Reading from the N-terminus, the 218-residue chain is Replication protein RepB (218 aa).

Residues 1–26 form a disordered region; the sequence is MKSESKIDWTVPRPNKNPKTKQPYKR. Over residues 16-26 the composition is skewed to basic residues; that stretch reads KNPKTKQPYKR.

Belongs to the Gram-positive plasmids replication protein type 2 family.

Its function is as follows. Is essential for plasmid replication. Nicks the positive strand at the plus origin of replication. This chain is Replication protein RepB (repB), found in Lactiplantibacillus plantarum (Lactobacillus plantarum).